The sequence spans 397 residues: UDP-GlcNAc:betaGal beta-1,3-N-acetylglucosaminyltransferase 7 (397 aa).

Over 1–6 (MSLWKK) the chain is Cytoplasmic. The helical; Signal-anchor for type II membrane protein transmembrane segment at 7–26 (TLYKSVCLALALLVAVTVFQ) threads the bilayer. Over 27 to 397 (RSVTPGQFLQ…LTCSLKFQVL (371 aa)) the chain is Lumenal. Residues Asn84, Asn90, Asn210, and Asn387 are each glycosylated (N-linked (GlcNAc...) asparagine).

It belongs to the glycosyltransferase 31 family.

It localises to the golgi apparatus membrane. The protein operates within protein modification; protein glycosylation. In terms of biological role, N-acetyl glucosamine (GlcNAc) transferase that catalyzes the transfer of GlcNAc via a beta1-&gt;3 linkage from UDP-GlcNAc to the non-reducing terminal galactose (Gal) in the linearly growing chain of N- and O-linked keratan sulfate proteoglycans. Cooperates with B4GALT4 galactosyltransferase and CHST6 and CHST1 sulfotransferases to construct and elongate mono- and disulfated disaccharide units [-&gt;3Galbeta1-&gt;4(6-sulfoGlcNAcbeta)1-&gt;] and [-&gt;3(6-sulfoGalbeta)1-&gt;4(6-sulfoGlcNAcbeta)1-&gt;] within keratan sulfate polymer. Involved in biosynthesis of N-linked keratan sulfate proteoglycans in cornea, with an impact on proteoglycan fibril organization and corneal transparency. May play a role in the maintenance of tissue architecture by suppressing cellular motility and invasion. This chain is UDP-GlcNAc:betaGal beta-1,3-N-acetylglucosaminyltransferase 7 (B3gnt7), found in Rattus norvegicus (Rat).